The sequence spans 450 residues: MLATLASATSEDAVAALEAACAAQTSWARTAPRVRAEILRRAFDLVTARSEDFALLMTLEMGKPLAEARGEVAYGAEFLRWFSEETVRDYGRYLTTPEGKNKILVQHKPVGPCLLITPWNFPLAMATRKVAPAVAAGCTMVLKPAKLTPLTSQLFAQTMMEAGLPAGVLNVVSSSSASGISGPLLKDSRLRKVSFTGSTPVGKRLMSDASRHVLRTSMELGGNAPFVVFEDADLDKAVEGAMAAKMRNMGEACTAANRFLVQESVAQEFTRKFAAAMGALSTGRGTDPASQVGPLINNGARDDIHALVTAAVDAGAVAVTGGAPVDGPGYFYQPTVLADVPNNAAILGQEIFGPVAPVTTFTTEQDAIKLANASEYGLAAYLYSRDFNRLLRVAEQIEFGMVGFNAGIISNAAAPFGGVKQSGLGREGGSEGIAEYTTTQYIGIADPYEN.

119–120 (WN) serves as a coordination point for NADP(+). Arginine 128 lines the substrate pocket. NADP(+) is bound by residues 143-146 (KPAK) and 197-198 (GS). Glutamate 219 acts as the Proton acceptor in catalysis. Position 220 (leucine 220) interacts with NADP(+). The substrate site is built by arginine 247 and cysteine 253. Cysteine 253 acts as the Nucleophile in catalysis. Glutamate 350 lines the NADP(+) pocket. Serine 410 contacts substrate.

The protein belongs to the aldehyde dehydrogenase family. In terms of assembly, homodimer.

The enzyme catalyses succinate semialdehyde + NAD(+) + H2O = succinate + NADH + 2 H(+). It carries out the reaction succinate semialdehyde + NADP(+) + H2O = succinate + NADPH + 2 H(+). Its pathway is alkaloid degradation; nicotine degradation. Its function is as follows. Catalyzes the NAD(P)(+)-dependent oxidation of succinate semialdehyde to succinate, which may enter the citric acid cycle. Is involved in the catabolism of 4-methylaminobutanoate produced from nicotine. Acts preferentially with NADP(+) as cosubstrate but can also use NAD(+). To a lesser extent, is active also towards butyraldehyde (8.5% of the activity observed with succinate semialdehyde) and propionaldehyde (1.6% of the activity observed with succinate semialdehyde) as substrates. The chain is Succinate-semialdehyde dehydrogenase (sad) from Paenarthrobacter nicotinovorans (Arthrobacter nicotinovorans).